Reading from the N-terminus, the 454-residue chain is Tetrahydroanabasine acetyltransferase (454 aa).

Catalysis depends on proton acceptor residues His-164 and Asp-389.

This sequence belongs to the plant acyltransferase family. Monomer.

The enzyme catalyses tetrahydroanabasine + acetyl-CoA = ammodendrine + CoA. Its pathway is alkaloid biosynthesis. Functionally, tetrahydroanabasine acetyltransferase involved in the accumulation of quinolizidine type antinutritional alkaloids (QAs) natural products. QAs impart a bitter taste to plants, acting as repellents and toxicants for herbivores and predators, and possess a variety of pharmacological effects, including sedative, anticonvulsant, anti-inflammatory, antiviral, antitumor, antipyretic, anti-hepatitis B, antifibrotic, antiallergic, antidiarrheal, analgesic and antimicrobial activities. Mediates the conversion of tetrahydroanabasine into ammodendrine. This Lupinus albus (White lupine) protein is Tetrahydroanabasine acetyltransferase.